The chain runs to 482 residues: MKFIIKLFPEITIKSQSVRLRFIKILTGNIRNVLKHYDETLAVVRHWDNIEVRAKDENQRLAIRDALTRIPGIHHILEVEDVPFTDMHDIFEKALVQYRDQLEGKTFCVRVKRRGKHDFSSIDVERYVGGGLNQHIESARVKLTNPEVTVHLEVEDDRLLLIKGRYEGIGGFPIGTQEDVLSLISGGFDSGVSSYMLMRRGCRVHYCFFNLGGAAHEIGVRQVAHYLWNRFGSSHRVRFVAINFEPVVGEILEKIDDGQMGVILKRMMVRAASKVAERYGVQALVTGEALGQVSSQTLTNLRLIDNVSDTLILRPLISYDKEHIINLARQIGTEDFARTMPEYCGVISKSPTVKAAKSKIEAEEEKFDFSILDKVVEEANNVDIREIAQQTEQEVVEVETVNGFGPNDVILDIRSIDEQEDKPLKVEGIDVVSLPFYKLSTKFGDLDQNRTWLLWCERGVMSRLQALYLREQGFNNVKVYRP.

Positions 61-165 constitute a THUMP domain; sequence LAIRDALTRI…DDRLLLIKGR (105 aa). Residues 183–184, lysine 265, glycine 287, and glutamine 296 contribute to the ATP site; that span reads LI. Cysteine 344 and cysteine 456 are joined by a disulfide. Positions 404-482 constitute a Rhodanese domain; the sequence is FGPNDVILDI…GFNNVKVYRP (79 aa). The active-site Cysteine persulfide intermediate is the cysteine 456.

This sequence belongs to the ThiI family.

It is found in the cytoplasm. The catalysed reaction is [ThiI sulfur-carrier protein]-S-sulfanyl-L-cysteine + a uridine in tRNA + 2 reduced [2Fe-2S]-[ferredoxin] + ATP + H(+) = [ThiI sulfur-carrier protein]-L-cysteine + a 4-thiouridine in tRNA + 2 oxidized [2Fe-2S]-[ferredoxin] + AMP + diphosphate. It carries out the reaction [ThiS sulfur-carrier protein]-C-terminal Gly-Gly-AMP + S-sulfanyl-L-cysteinyl-[cysteine desulfurase] + AH2 = [ThiS sulfur-carrier protein]-C-terminal-Gly-aminoethanethioate + L-cysteinyl-[cysteine desulfurase] + A + AMP + 2 H(+). Its pathway is cofactor biosynthesis; thiamine diphosphate biosynthesis. Functionally, catalyzes the ATP-dependent transfer of a sulfur to tRNA to produce 4-thiouridine in position 8 of tRNAs, which functions as a near-UV photosensor. Also catalyzes the transfer of sulfur to the sulfur carrier protein ThiS, forming ThiS-thiocarboxylate. This is a step in the synthesis of thiazole, in the thiamine biosynthesis pathway. The sulfur is donated as persulfide by IscS. This is tRNA sulfurtransferase from Escherichia coli O139:H28 (strain E24377A / ETEC).